We begin with the raw amino-acid sequence, 577 residues long: Torulene dioxygenase (577 aa).

Fe(2+)-binding residues include H239, H291, H361, and H570.

It belongs to the carotenoid oxygenase family. Requires Fe(2+) as cofactor.

The protein resides in the cytoplasm. It localises to the cytosol. The enzyme catalyses torulene + O2 = 4'-apo-beta-carotenal + 3-methyl-2-butenal. It functions in the pathway carotenoid biosynthesis. Its function is as follows. Torulene dioxygenase; part of the pathway that mediates the biosynthesis of neurosporaxanthin, a carboxylic apocarotenoid acting as an essential protective pigments and leading to orange pigmentation. CarT mediates the cleavage of torulene into beta-apo-4'-carotenal, the aldehyde corresponding to the acidic neurosporaxanthin. Is also active on other monocyclic synthetic substrates such as beta-apo-8'-carotenal and beta-apo-10'-carotenal to produce beta-apo-14'-carotenal and retinal(beta-apo-15'-carotenal), respectively. Neurosporaxanthin is synthesized from geranyl-geranyl pyrophosphate (GGPP) through several enzymatic activities. Phytoene synthase activity performed by the bifunctional enzyme carAR first produces phytoene from geranyl-geranyl pyrophosphate (GGPP). The phytoene dehydrogenase carB then introduces 4 desaturations to lead to lycopene which is substrate of the carotene cyclase activity of carAR that leads to the production of gamma-carotene. CarB then performs a 5th desaturation reaction to yield torulene. Torulene is the substrate of the dioxidase carT that breaks the molecule, removing five carbon atoms to yield beta-apo-4'-carotenal, whereas the aldehyde dehydrogenase carD mediates the last step by converting beta-apo-4'-carotenal into neurosporaxanthin. The chain is Torulene dioxygenase from Fusarium fujikuroi (Bakanae and foot rot disease fungus).